Reading from the N-terminus, the 133-residue chain is UPF0225 protein BP2036 (133 aa).

Belongs to the UPF0225 family.

The chain is UPF0225 protein BP2036 from Bordetella pertussis (strain Tohama I / ATCC BAA-589 / NCTC 13251).